Reading from the N-terminus, the 428-residue chain is Serine--tRNA ligase (428 aa).

Residue 235–237 coordinates L-serine; sequence TAE. 266–268 lines the ATP pocket; the sequence is RYE. Glutamate 289 contributes to the L-serine binding site. Position 353–356 (353–356) interacts with ATP; the sequence is EVSS. Serine 389 lines the L-serine pocket.

Belongs to the class-II aminoacyl-tRNA synthetase family. Type-1 seryl-tRNA synthetase subfamily. In terms of assembly, homodimer. The tRNA molecule binds across the dimer.

It localises to the cytoplasm. It catalyses the reaction tRNA(Ser) + L-serine + ATP = L-seryl-tRNA(Ser) + AMP + diphosphate + H(+). The catalysed reaction is tRNA(Sec) + L-serine + ATP = L-seryl-tRNA(Sec) + AMP + diphosphate + H(+). Its pathway is aminoacyl-tRNA biosynthesis; selenocysteinyl-tRNA(Sec) biosynthesis; L-seryl-tRNA(Sec) from L-serine and tRNA(Sec): step 1/1. Functionally, catalyzes the attachment of serine to tRNA(Ser). Is also able to aminoacylate tRNA(Sec) with serine, to form the misacylated tRNA L-seryl-tRNA(Sec), which will be further converted into selenocysteinyl-tRNA(Sec). The protein is Serine--tRNA ligase of Blochmanniella pennsylvanica (strain BPEN).